Consider the following 735-residue polypeptide: Nuclear intron maturase 2, mitochondrial (735 aa).

A mitochondrion-targeting transit peptide spans 1-12; it reads MRRSFSVLGPYK. Residues 161 to 460 enclose the Reverse transcriptase domain; it reads RDKTDYESLS…KGIMFLDHVL (300 aa). An intron maturase type-2 region spans residues 485–653; it reads GTLLSVTASL…KFLIEYLTLD (169 aa). The interval 707 to 735 is disordered; it reads SSTYNRDNDDQKNKEEDEDSEDGLRIARM. Residues 712 to 721 are compositionally biased toward basic and acidic residues; sequence RDNDDQKNKE.

The protein belongs to the plant nuclear intron maturase (nMat) family. In terms of assembly, associated to a large ribonucleoprotein complex in mitochondria containing group-II intron RNAs.

The protein localises to the mitochondrion. Nuclear-encoded maturase required for splicing of group-II introns in mitochondria. Involved in the splicing of mitochondrial COX2, NAD1 and NAD7 transcripts. Necessary for mitochondrial biogenesis during early developmental stages. The polypeptide is Nuclear intron maturase 2, mitochondrial (Arabidopsis thaliana (Mouse-ear cress)).